Reading from the N-terminus, the 143-residue chain is Large ribosomal subunit protein uL15 (143 aa).

Residues 1–45 (MLLNTVQPGVGAKHAKRRVGRGIGSGLGKTCGRGHKGQKSRAGGF) are disordered. A compositionally biased stretch (gly residues) spans 21-31 (RGIGSGLGKTC).

The protein belongs to the universal ribosomal protein uL15 family. Part of the 50S ribosomal subunit.

In terms of biological role, binds to the 23S rRNA. The chain is Large ribosomal subunit protein uL15 from Chromobacterium violaceum (strain ATCC 12472 / DSM 30191 / JCM 1249 / CCUG 213 / NBRC 12614 / NCIMB 9131 / NCTC 9757 / MK).